A 545-amino-acid chain; its full sequence is Chaperonin GroEL 2 (545 aa).

ATP contacts are provided by residues 29–32 (TLGP), 86–90 (DGTTT), G413, 479–481 (NAA), and D495.

It belongs to the chaperonin (HSP60) family. As to quaternary structure, forms a cylinder of 14 subunits composed of two heptameric rings stacked back-to-back. Interacts with the co-chaperonin GroES.

The protein localises to the cytoplasm. The enzyme catalyses ATP + H2O + a folded polypeptide = ADP + phosphate + an unfolded polypeptide.. Together with its co-chaperonin GroES, plays an essential role in assisting protein folding. The GroEL-GroES system forms a nano-cage that allows encapsulation of the non-native substrate proteins and provides a physical environment optimized to promote and accelerate protein folding. The chain is Chaperonin GroEL 2 from Prochlorococcus marinus (strain MIT 9215).